We begin with the raw amino-acid sequence, 83 residues long: U25-theraphotoxin-Cg1b (83 aa).

Residues 1-23 (MRFHTLLFLSFLLLVSCALICTA) form the signal peptide. The propeptide occupies 24–48 (QHPGLEKSGMFHENVGKGQHIEEKR). Disulfide bonds link C50–C66, C57–C71, and C65–C79.

This sequence belongs to the neurotoxin 07 (Beta/delta-agtx) family. 03 (aga-4) subfamily. JZTX sub-subfamily. As to expression, expressed by the venom gland.

The protein localises to the secreted. Functionally, probable ion channel inhibitor. In Chilobrachys guangxiensis (Chinese earth tiger tarantula), this protein is U25-theraphotoxin-Cg1b.